The chain runs to 206 residues: Pyridoxine/pyridoxamine 5'-phosphate oxidase (206 aa).

FMN-binding positions include 53–58 (RMVLLK), 68–69 (YT), Lys75, and Gln97. A substrate-binding site is contributed by Lys58. Positions 115, 119, and 123 each coordinate substrate. FMN is bound by residues 132-133 (QS) and Trp177. Residue 183–185 (RLH) coordinates substrate. An FMN-binding site is contributed by Arg187.

This sequence belongs to the pyridoxamine 5'-phosphate oxidase family. Homodimer. FMN serves as cofactor.

It catalyses the reaction pyridoxamine 5'-phosphate + O2 + H2O = pyridoxal 5'-phosphate + H2O2 + NH4(+). The catalysed reaction is pyridoxine 5'-phosphate + O2 = pyridoxal 5'-phosphate + H2O2. It participates in cofactor metabolism; pyridoxal 5'-phosphate salvage; pyridoxal 5'-phosphate from pyridoxamine 5'-phosphate: step 1/1. It functions in the pathway cofactor metabolism; pyridoxal 5'-phosphate salvage; pyridoxal 5'-phosphate from pyridoxine 5'-phosphate: step 1/1. In terms of biological role, catalyzes the oxidation of either pyridoxine 5'-phosphate (PNP) or pyridoxamine 5'-phosphate (PMP) into pyridoxal 5'-phosphate (PLP). In Sinorhizobium fredii (strain NBRC 101917 / NGR234), this protein is Pyridoxine/pyridoxamine 5'-phosphate oxidase.